A 427-amino-acid polypeptide reads, in one-letter code: Ectonucleoside triphosphate diphosphohydrolase 5 (427 aa).

A signal peptide spans 1–24 (MATSWGAVFMLIIACVGSTVFYRE). Catalysis depends on glutamate 171, which acts as the Proton acceptor. A glycan (N-linked (GlcNAc...) asparagine) is linked at asparagine 231. 2 cysteine pairs are disulfide-bonded: cysteine 271–cysteine 302 and cysteine 362–cysteine 376.

Belongs to the GDA1/CD39 NTPase family. In terms of assembly, monomer; active form. Homodimer; disulfide-linked. Homodimers are enzymatically inactive. Requires Ca(2+) as cofactor. Mg(2+) serves as cofactor. N-glycosylated; high-mannose type. As to expression, ubiquitous.

The protein resides in the endoplasmic reticulum. The protein localises to the secreted. It catalyses the reaction a ribonucleoside 5'-diphosphate + H2O = a ribonucleoside 5'-phosphate + phosphate + H(+). The enzyme catalyses GDP + H2O = GMP + phosphate + H(+). It carries out the reaction UDP + H2O = UMP + phosphate + H(+). The catalysed reaction is IDP + H2O = IMP + phosphate + H(+). It catalyses the reaction CDP + H2O = CMP + phosphate + H(+). The enzyme catalyses ADP + H2O = AMP + phosphate + H(+). The protein operates within protein modification; protein glycosylation. Functionally, hydrolyzes nucleoside diphosphates with a preference for GDP, IDP and UDP compared to ADP and CDP. In the lumen of the endoplasmic reticulum, hydrolyzes UDP that acts as an end-product feedback inhibitor of the UDP-Glc:glycoprotein glucosyltransferases. UMP can be transported back by an UDP-sugar antiporter to the cytosol where it is consumed to regenerate UDP-glucose. Therefore, it positively regulates protein reglucosylation by clearing UDP from the ER lumen and by promoting the regeneration of UDP-glucose. Protein reglucosylation is essential to proper glycoprotein folding and quality control in the ER. This is Ectonucleoside triphosphate diphosphohydrolase 5 (Entpd5) from Mus musculus (Mouse).